Reading from the N-terminus, the 37-residue chain is Large ribosomal subunit protein bL36c (37 aa).

It belongs to the bacterial ribosomal protein bL36 family.

The protein localises to the plastid. It is found in the chloroplast. The protein is Large ribosomal subunit protein bL36c of Thalassiosira pseudonana (Marine diatom).